Consider the following 363-residue polypeptide: Histidinol-phosphate aminotransferase (363 aa).

Lys218 carries the post-translational modification N6-(pyridoxal phosphate)lysine.

Belongs to the class-II pyridoxal-phosphate-dependent aminotransferase family. Histidinol-phosphate aminotransferase subfamily. Homodimer. Requires pyridoxal 5'-phosphate as cofactor.

The enzyme catalyses L-histidinol phosphate + 2-oxoglutarate = 3-(imidazol-4-yl)-2-oxopropyl phosphate + L-glutamate. It participates in amino-acid biosynthesis; L-histidine biosynthesis; L-histidine from 5-phospho-alpha-D-ribose 1-diphosphate: step 7/9. The polypeptide is Histidinol-phosphate aminotransferase (Xanthomonas euvesicatoria pv. vesicatoria (strain 85-10) (Xanthomonas campestris pv. vesicatoria)).